A 1039-amino-acid chain; its full sequence is RNA-binding protein Unr (1039 aa).

The segment covering 49-62 (TTLGLQPQGQGPSP) has biased composition (polar residues). 2 disordered regions span residues 49–126 (TTLG…QQQH) and 165–184 (SIFG…PSQT). Low complexity-rich tracts occupy residues 63–80 (QQQQ…QHQQ), 89–126 (QQHM…QQQH), and 165–182 (SIFG…ADPS). In terms of domain architecture, CSD 1 spans 186–250 (RETGIIEKLL…GKPIASQVSK (65 aa)). The CSD 2; degenerate domain maps to 261–337 (RVTGTVTTEL…GNLGACHIRL (77 aa)). The CSD 3 domain occupies 345-413 (KYRGVVCSMK…GREFACNITR (69 aa)). One can recognise a CSD 4; degenerate domain in the interval 428–503 (VYKGQVLKSL…RDQLQRATSI (76 aa)). One can recognise a CSD 5 domain in the interval 517–585 (REQGTIASLK…SRLQAIRIKH (69 aa)). The CSD 6; degenerate domain occupies 593-673 (FETLVASNIE…KECIAVNVQQ (81 aa)). The disordered stretch occupies residues 721-741 (QNGYVMHGSPGGSTSSVGSNN). Low complexity predominate over residues 732–741 (GSTSSVGSNN). A CSD 7 domain is found at 763–831 (VYRGFIAVMK…NCLPAENVRM (69 aa)). The CSD 8; degenerate domain maps to 846-919 (THNGVVARPL…SGRAACVNAV (74 aa)). A CSD 9 domain is found at 922–987 (KKRATVDSIK…GKSSACNVLK (66 aa)).

It belongs to the UNR family. As to quaternary structure, interacts with Sxl; cooperates with Sxl to prevent translation of msl-2 transcripts. Interacts with mle; promoting association between mle and roX2 non-coding RNA. Interacts (via CSD domain 7-9) with pAbp; promoting translation inhibition of msl-2 transcripts.

It is found in the cytoplasm. Its function is as follows. RNA-binding protein that acts as a regulator of dosage compensation in both males and females. In males, acts as positive regulator of dosage compensation by promoting assembly of the MSL complex, a multiprotein complex that mediates X-chromosome dosage compensation. Promotes MSL complex assembly via association with roX1 and roX2 non-coding RNA components of the MSL complex, facilitating the interaction between non-coding RNAs and mle. In females, acts as an inhibitor of dosage compensation together with Sxl by preventing production of msl-2 protein, an essential component of the MSL complex. Specifically binds to the 3'-UTR of msl-2 transcripts, and cooperates with Sxl to prevent translation initiation of msl-2 transcripts. Mechanistically, Sxl and Unr inhibit translation initiation by preventing ribosome recruitment after pAbp-mediated recruitment of the eIF4F complex. This is RNA-binding protein Unr from Drosophila melanogaster (Fruit fly).